The primary structure comprises 551 residues: L-lactate permease (551 aa).

A run of 13 helical transmembrane segments spans residues 13-33, 37-57, 69-89, 131-151, 159-179, 194-214, 220-240, 244-264, 366-386, 405-425, 438-458, 494-514, and 530-550; these read NIWL…FALI, LKGY…ALLF, VVYG…AAVF, GAAG…GLGF, LCLI…PILV, MVGR…MAIM, IKET…AQYL, FIGP…CLTL, FDWF…SIVW, LALP…SNYS, TGHA…FLTG, VTGK…VGLV, and IFTC…TWMI.

It belongs to the lactate permease family.

The protein localises to the cell inner membrane. The enzyme catalyses (S)-lactate(in) + H(+)(in) = (S)-lactate(out) + H(+)(out). It carries out the reaction (R)-lactate(in) + H(+)(in) = (R)-lactate(out) + H(+)(out). It catalyses the reaction glycolate(in) + H(+)(in) = glycolate(out) + H(+)(out). Inhibited by the proton ionophore carbonyl cyanide m-chlorophenylhydrazone (CCCP). Uptake of L-lactate across the membrane. Can also transport D-lactate and glycolate. Seems to be driven by a proton motive force. This is L-lactate permease from Escherichia coli (strain K12).